The primary structure comprises 200 residues: Inner membrane-spanning protein YciB (200 aa).

6 helical membrane passes run 7–27 (HPLF…FVNA), 32–52 (FAAT…SYVV), 56–76 (IPLM…LTLV), 93–113 (LFAA…AIMF), 126–146 (ILTF…EIIW), and 153–173 (FWVG…AIAQ).

Belongs to the YciB family.

Its subcellular location is the cell inner membrane. In terms of biological role, plays a role in cell envelope biogenesis, maintenance of cell envelope integrity and membrane homeostasis. The polypeptide is Inner membrane-spanning protein YciB (Bradyrhizobium sp. (strain ORS 278)).